A 224-amino-acid polypeptide reads, in one-letter code: tRNA (guanine-N(7)-)-methyltransferase (224 aa).

Glu-54, Glu-79, Glu-106, and Asp-129 together coordinate S-adenosyl-L-methionine. Residue Asp-129 is part of the active site. Substrate is bound by residues Lys-133 and Asp-165.

The protein belongs to the class I-like SAM-binding methyltransferase superfamily. TrmB family.

It catalyses the reaction guanosine(46) in tRNA + S-adenosyl-L-methionine = N(7)-methylguanosine(46) in tRNA + S-adenosyl-L-homocysteine. It participates in tRNA modification; N(7)-methylguanine-tRNA biosynthesis. In terms of biological role, catalyzes the formation of N(7)-methylguanine at position 46 (m7G46) in tRNA. The chain is tRNA (guanine-N(7)-)-methyltransferase from Chlamydia caviae (strain ATCC VR-813 / DSM 19441 / 03DC25 / GPIC) (Chlamydophila caviae).